The following is a 61-amino-acid chain: Small ribosomal subunit protein uS14B (61 aa).

Positions 24, 27, 40, and 43 each coordinate Zn(2+).

It belongs to the universal ribosomal protein uS14 family. Zinc-binding uS14 subfamily. In terms of assembly, part of the 30S ribosomal subunit. Contacts proteins S3 and S10. Zn(2+) serves as cofactor.

Binds 16S rRNA, required for the assembly of 30S particles and may also be responsible for determining the conformation of the 16S rRNA at the A site. This chain is Small ribosomal subunit protein uS14B, found in Mycobacteroides abscessus (strain ATCC 19977 / DSM 44196 / CCUG 20993 / CIP 104536 / JCM 13569 / NCTC 13031 / TMC 1543 / L948) (Mycobacterium abscessus).